Consider the following 107-residue polypeptide: uncharacterized protein (107 aa).

This sequence belongs to the HesB/IscA family.

This is an uncharacterized protein from Azotobacter vinelandii.